Reading from the N-terminus, the 402-residue chain is Plasminogen activator inhibitor 1 (402 aa).

A signal peptide spans 1-23 (MRMSLVFACLAMGLALTFAEGSA). 3 N-linked (GlcNAc...) asparagine glycosylation sites follow: Asn232, Asn288, and Asn352.

Belongs to the serpin family. As to quaternary structure, forms a heterodimer with TMPRSS7. Interacts with VTN. Binds LRP1B; binding is followed by internalization and degradation. Interacts with PPP1CB. In complex with PLAU/uPA, interacts with PLAUR/uPAR. Interacts with SORL1 and LRP1, either alone or in complex with PLAU; these interactions are abolished in the presence of LRPAP1/RAP. The ternary complex composed of PLAUR-PLAU-PAI1 also interacts with SORL1. Interacts with PLAT/tPA. Also interacts with SORL1, when complexed to PLAT/tPA.

It is found in the secreted. Functionally, serine protease inhibitor. Inhibits TMPRSS7. Is a primary inhibitor of tissue-type plasminogen activator (PLAT) and urokinase-type plasminogen activator (PLAU). As PLAT inhibitor, it is required for fibrinolysis down-regulation and is responsible for the controlled degradation of blood clots. As PLAU inhibitor, it is involved in the regulation of cell adhesion and spreading. Acts as a regulator of cell migration, independently of its role as protease inhibitor. It is required for stimulation of keratinocyte migration during cutaneous injury repair. It is involved in cellular and replicative senescence. Plays a role in alveolar type 2 cells senescence in the lung. Is involved in the regulation of cementogenic differentiation of periodontal ligament stem cells, and regulates odontoblast differentiation and dentin formation during odontogenesis. The polypeptide is Plasminogen activator inhibitor 1 (SERPINE1) (Sus scrofa (Pig)).